A 360-amino-acid chain; its full sequence is Photosystem II protein D1 1 (360 aa).

A run of 3 helical transmembrane segments spans residues 29 to 46 (YVGW…TATT), 118 to 133 (HFLI…EWEL), and 142 to 156 (WICV…AATA). Chlorophyll a is bound at residue H118. Residue Y126 participates in pheophytin a binding. [CaMn4O5] cluster is bound by residues D170 and E189. Residues 197–218 (FHMLGVAGVFGGSLFSAMHGSL) form a helical membrane-spanning segment. H198 contributes to the chlorophyll a binding site. A quinone contacts are provided by residues H215 and 264-265 (SF). Residue H215 coordinates Fe cation. Residue H272 participates in Fe cation binding. A helical membrane pass occupies residues 274 to 288 (FLGAWPVVGIWFTAL). [CaMn4O5] cluster-binding residues include H332, E333, D342, and A344. Residues 345-360 (AGEQAPVALQAPAING) constitute a propeptide that is removed on maturation.

Belongs to the reaction center PufL/M/PsbA/D family. PSII is composed of 1 copy each of membrane proteins PsbA, PsbB, PsbC, PsbD, PsbE, PsbF, PsbH, PsbI, PsbJ, PsbK, PsbL, PsbM, PsbT, PsbX, PsbY, PsbZ, Psb30/Ycf12, peripheral proteins PsbO, CyanoQ (PsbQ), PsbU, PsbV and a large number of cofactors. It forms dimeric complexes. Requires The D1/D2 heterodimer binds P680, chlorophylls that are the primary electron donor of PSII, and subsequent electron acceptors. It shares a non-heme iron and each subunit binds pheophytin, quinone, additional chlorophylls, carotenoids and lipids. D1 provides most of the ligands for the Mn4-Ca-O5 cluster of the oxygen-evolving complex (OEC). There is also a Cl(-1) ion associated with D1 and D2, which is required for oxygen evolution. The PSII complex binds additional chlorophylls, carotenoids and specific lipids. as cofactor. Tyr-161 forms a radical intermediate that is referred to as redox-active TyrZ, YZ or Y-Z. In terms of processing, C-terminally processed by CtpA; processing is essential to allow assembly of the oxygen-evolving complex and thus photosynthetic growth.

The protein resides in the cellular thylakoid membrane. The catalysed reaction is 2 a plastoquinone + 4 hnu + 2 H2O = 2 a plastoquinol + O2. Its function is as follows. Photosystem II (PSII) is a light-driven water:plastoquinone oxidoreductase that uses light energy to abstract electrons from H(2)O, generating O(2) and a proton gradient subsequently used for ATP formation. It consists of a core antenna complex that captures photons, and an electron transfer chain that converts photonic excitation into a charge separation. The D1/D2 (PsbA/PsbD) reaction center heterodimer binds P680, the primary electron donor of PSII as well as several subsequent electron acceptors. The chain is Photosystem II protein D1 1 from Picosynechococcus sp. (strain ATCC 27264 / PCC 7002 / PR-6) (Agmenellum quadruplicatum).